The sequence spans 432 residues: Adenylosuccinate synthetase 2 (432 aa).

GTP-binding positions include 13 to 19 (GDEGKGK) and 41 to 43 (GHT). The Proton acceptor role is filled by Asp-14. 2 residues coordinate Mg(2+): Asp-14 and Gly-41. IMP-binding positions include 14–17 (DEGK), 39–42 (NAGH), Thr-130, Arg-144, Gln-225, Thr-240, and Arg-304. The active-site Proton donor is His-42. Substrate is bound at residue 300–306 (ATTGRSR). Residues Arg-306, 332-334 (KLD), and 415-417 (STG) each bind GTP.

This sequence belongs to the adenylosuccinate synthetase family. In terms of assembly, homodimer. Requires Mg(2+) as cofactor.

Its subcellular location is the cytoplasm. It catalyses the reaction IMP + L-aspartate + GTP = N(6)-(1,2-dicarboxyethyl)-AMP + GDP + phosphate + 2 H(+). Its pathway is purine metabolism; AMP biosynthesis via de novo pathway; AMP from IMP: step 1/2. Plays an important role in the de novo pathway of purine nucleotide biosynthesis. Catalyzes the first committed step in the biosynthesis of AMP from IMP. The chain is Adenylosuccinate synthetase 2 from Photorhabdus laumondii subsp. laumondii (strain DSM 15139 / CIP 105565 / TT01) (Photorhabdus luminescens subsp. laumondii).